Here is a 133-residue protein sequence, read N- to C-terminus: Small ribosomal subunit protein uS11 (133 aa).

It belongs to the universal ribosomal protein uS11 family. As to quaternary structure, part of the 30S ribosomal subunit. Interacts with proteins S7 and S18. Binds to IF-3.

In terms of biological role, located on the platform of the 30S subunit, it bridges several disparate RNA helices of the 16S rRNA. Forms part of the Shine-Dalgarno cleft in the 70S ribosome. The chain is Small ribosomal subunit protein uS11 from Bordetella petrii (strain ATCC BAA-461 / DSM 12804 / CCUG 43448).